We begin with the raw amino-acid sequence, 426 residues long: D-tagatose-1,6-bisphosphate aldolase subunit KbaZ (426 aa).

The protein belongs to the GatZ/KbaZ family. KbaZ subfamily. In terms of assembly, forms a complex with KbaY.

It functions in the pathway carbohydrate metabolism; D-tagatose 6-phosphate degradation; D-glyceraldehyde 3-phosphate and glycerone phosphate from D-tagatose 6-phosphate: step 2/2. Its function is as follows. Component of the tagatose-1,6-bisphosphate aldolase KbaYZ that is required for full activity and stability of the Y subunit. Could have a chaperone-like function for the proper and stable folding of KbaY. When expressed alone, KbaZ does not show any aldolase activity. The polypeptide is D-tagatose-1,6-bisphosphate aldolase subunit KbaZ (Escherichia fergusonii (strain ATCC 35469 / DSM 13698 / CCUG 18766 / IAM 14443 / JCM 21226 / LMG 7866 / NBRC 102419 / NCTC 12128 / CDC 0568-73)).